The chain runs to 458 residues: tRNA modification GTPase MnmE (458 aa).

3 residues coordinate (6S)-5-formyl-5,6,7,8-tetrahydrofolate: R22, E84, and R123. The TrmE-type G domain occupies 220–379; it reads GISTAIIGRP…LEKAIADLFF (160 aa). N230 contributes to the K(+) binding site. Residues 230 to 235, 249 to 255, and 274 to 277 each bind GTP; these read NVGKSS, TDIAGTT, and DTAG. S234 lines the Mg(2+) pocket. Residues T249, I251, and T254 each coordinate K(+). T255 is a binding site for Mg(2+). K458 contributes to the (6S)-5-formyl-5,6,7,8-tetrahydrofolate binding site.

Belongs to the TRAFAC class TrmE-Era-EngA-EngB-Septin-like GTPase superfamily. TrmE GTPase family. In terms of assembly, homodimer. Heterotetramer of two MnmE and two MnmG subunits. Requires K(+) as cofactor.

It is found in the cytoplasm. In terms of biological role, exhibits a very high intrinsic GTPase hydrolysis rate. Involved in the addition of a carboxymethylaminomethyl (cmnm) group at the wobble position (U34) of certain tRNAs, forming tRNA-cmnm(5)s(2)U34. The protein is tRNA modification GTPase MnmE of Bacillus mycoides (strain KBAB4) (Bacillus weihenstephanensis).